Here is a 364-residue protein sequence, read N- to C-terminus: Peptide chain release factor 1 (364 aa).

An N5-methylglutamine modification is found at Gln232.

Belongs to the prokaryotic/mitochondrial release factor family. Post-translationally, methylated by PrmC. Methylation increases the termination efficiency of RF1.

The protein localises to the cytoplasm. Its function is as follows. Peptide chain release factor 1 directs the termination of translation in response to the peptide chain termination codons UAG and UAA. The polypeptide is Peptide chain release factor 1 (Sorangium cellulosum (strain So ce56) (Polyangium cellulosum (strain So ce56))).